Reading from the N-terminus, the 158-residue chain is Probable flavodoxin 1 (158 aa).

The Flavodoxin-like domain occupies A4–L144.

It belongs to the flavodoxin family. FMN is required as a cofactor.

Low-potential electron donor to a number of redox enzymes. In Bacillus subtilis (strain 168), this protein is Probable flavodoxin 1 (ykuN).